Consider the following 382-residue polypeptide: Alanine racemase (382 aa).

Residue K39 is the Proton acceptor; specific for D-alanine of the active site. N6-(pyridoxal phosphate)lysine is present on K39. A substrate-binding site is contributed by R138. Y265 acts as the Proton acceptor; specific for L-alanine in catalysis. Position 312 (M312) interacts with substrate.

This sequence belongs to the alanine racemase family. Pyridoxal 5'-phosphate serves as cofactor.

The enzyme catalyses L-alanine = D-alanine. It participates in amino-acid biosynthesis; D-alanine biosynthesis; D-alanine from L-alanine: step 1/1. Its function is as follows. Catalyzes the interconversion of L-alanine and D-alanine. May also act on other amino acids. This Staphylococcus saprophyticus subsp. saprophyticus (strain ATCC 15305 / DSM 20229 / NCIMB 8711 / NCTC 7292 / S-41) protein is Alanine racemase (alr).